We begin with the raw amino-acid sequence, 975 residues long: Aminopeptidase N (975 aa).

The Cytoplasmic segment spans residues 1 to 11; it reads MAKGFYISKAL. A helical; Signal-anchor for type II membrane protein transmembrane segment spans residues 12–32; that stretch reads GILAIVLGIAAVSTIIALSVV. Positions 33-74 are cytosolic Ser/Thr-rich junction; the sequence is YAQEKNKNAESSPVSSPVSSPVSSPVSPTNPSTTAATTLAQS. Residues 33–975 are Extracellular-facing; sequence YAQEKNKNAE…VLQWFRENSQ (943 aa). A disordered region spans residues 41–68; sequence AESSPVSSPVSSPVSSPVSPTNPSTTAA. The span at 43 to 59 shows a compositional bias: low complexity; sequence SSPVSSPVSSPVSSPVS. The metalloprotease stretch occupies residues 75 to 975; sequence KPWNHYRLPK…VLQWFRENSQ (901 aa). N-linked (GlcNAc...) asparagine glycosylation is present at Asn134. The residue at position 182 (Tyr182) is a Sulfotyrosine. 2 N-linked (GlcNAc...) asparagine glycosylation sites follow: Asn240 and Asn271. 358-362 contributes to the substrate binding site; that stretch reads GAMEN. His394 contacts Zn(2+). Glu395 (proton acceptor) is an active-site residue. Zn(2+)-binding residues include His398 and Glu417. Tyr425 and Tyr430 each carry sulfotyrosine. Residues Asn533, Asn580, Asn633, Asn689, and Asn747 are each glycosylated (N-linked (GlcNAc...) asparagine). 2 cysteine pairs are disulfide-bonded: Cys769–Cys776 and Cys806–Cys842. Asn826 carries an N-linked (GlcNAc...) asparagine glycan.

Belongs to the peptidase M1 family. As to quaternary structure, (Microbial infection) Interacts with CCoV spike glycoprotein. In terms of assembly, homodimer. Interacts with SLC6A19. The cofactor is Zn(2+). Sulfated. Post-translationally, N- and O-glycosylated. In terms of processing, may undergo proteolysis and give rise to a soluble form.

The protein resides in the cell membrane. The enzyme catalyses Release of an N-terminal amino acid, Xaa-|-Yaa- from a peptide, amide or arylamide. Xaa is preferably Ala, but may be most amino acids including Pro (slow action). When a terminal hydrophobic residue is followed by a prolyl residue, the two may be released as an intact Xaa-Pro dipeptide.. In terms of biological role, broad specificity aminopeptidase which plays a role in the final digestion of peptides generated from hydrolysis of proteins by gastric and pancreatic proteases. Also involved in the processing of various peptides including peptide hormones, such as angiotensin III and IV, neuropeptides, and chemokines. May also be involved the cleavage of peptides bound to major histocompatibility complex class II molecules of antigen presenting cells. May have a role in angiogenesis and promote cholesterol crystallization. May have a role in amino acid transport by acting as binding partner of amino acid transporter SLC6A19 and regulating its activity. Its function is as follows. (Microbial infection) Probable receptor for canine coronavirus (CCoV). This is Aminopeptidase N (ANPEP) from Canis lupus familiaris (Dog).